Here is a 117-residue protein sequence, read N- to C-terminus: Large ribosomal subunit protein uL18 (117 aa).

It belongs to the universal ribosomal protein uL18 family. Part of the 50S ribosomal subunit; part of the 5S rRNA/L5/L18/L25 subcomplex. Contacts the 5S and 23S rRNAs.

This is one of the proteins that bind and probably mediate the attachment of the 5S RNA into the large ribosomal subunit, where it forms part of the central protuberance. The protein is Large ribosomal subunit protein uL18 of Klebsiella pneumoniae subsp. pneumoniae (strain ATCC 700721 / MGH 78578).